Consider the following 416-residue polypeptide: MKFPDNHFSAAIVADTLSVSKRNVETWTQNGKLVPALDPNIHEKPYTKDQLETFEQFSAMFNSSWCEEMAVEPSRSYSLVELFAGAGGLALGLEQAGFKSVLLNEKDKYACATLRANRPNWNVIEDDIENVDFTHLNGKVDLLTGGFPCQPFSYAGKQLGFEDLRGTLVFEMARAIKEIKPKVFLAENVKGLAENDGGRTLSIIIKVLEDLGYKILEKEVYKAIFYKVPQKRERLIIIGVRTDLYDKLAYEKPSPYYKVLTVADALKAGELYDVDVPESTGQLYPERKAEIMSYVPEGGYWRDLPIRIAKEYMMKSFYLGGGKTGMARRLSWDEPSLTLVCTPAQKQTERCHPSESRPLTTREYARIQTFPDDWEFKGSVGQIYKQIGNAVPVNLALAIGKAIIRMLNAAPKDVFE.

In terms of domain architecture, SAM-dependent MTase C5-type spans 77–410 (YSLVELFAGA…KAIIRMLNAA (334 aa)). Cys-149 is a catalytic residue.

Belongs to the class I-like SAM-binding methyltransferase superfamily. C5-methyltransferase family.

The enzyme catalyses a 2'-deoxycytidine in DNA + S-adenosyl-L-methionine = a 5-methyl-2'-deoxycytidine in DNA + S-adenosyl-L-homocysteine + H(+). Functionally, a methylase, recognizes the double-stranded sequence 5'-GGNCC-3', methylates C-4 on both strands, and protects the DNA from cleavage by the PspPI endonuclease. In Psychrobacter sp. (strain TA137), this protein is Type II methyltransferase M.PspPI.